A 42-amino-acid chain; its full sequence is Potassium channel toxin gamma-KTx 3.4 (42 aa).

4 cysteine pairs are disulfide-bonded: C5–C23, C11–C34, C20–C39, and C24–C41.

The protein belongs to the ergtoxin family. Gamma-KTx 3 subfamily. Expressed by the venom gland.

Its subcellular location is the secreted. Blocks Kv11/ERG potassium channels. This chain is Potassium channel toxin gamma-KTx 3.4, found in Centruroides gracilis (Slenderbrown scorpion).